Consider the following 401-residue polypeptide: L-threonine ammonia-lyase (401 aa).

Lysine 51 is modified (N6-(pyridoxal phosphate)lysine). Pyridoxal 5'-phosphate contacts are provided by residues asparagine 78, 178-181 (GGGL), and serine 301. The ACT domain occupies 326–401 (FIETFVMDRP…AKGYEVRIVG (76 aa)).

It belongs to the serine/threonine dehydratase family. Homotetramer. It depends on pyridoxal 5'-phosphate as a cofactor.

The enzyme catalyses L-threonine = 2-oxobutanoate + NH4(+). The catalysed reaction is L-serine = pyruvate + NH4(+). It participates in amino-acid biosynthesis; L-isoleucine biosynthesis; 2-oxobutanoate from L-threonine: step 1/1. Activity is insensitive to allosteric regulators L-valine and L-isoleucine at low concentrations, while these L-amino acids are inhibitors at high concentrations. Is insensitive to ammonium chloride and AMP. Inhibited in the presence of aminoxyacetic acid (AOAA), an inhibitor of pyridoxal phosphate-dependent enzymes. In terms of biological role, catalyzes the conversion of L-threonine to 2-oxobutanoate and ammonia. Can also use L-serine, but the catalytic efficiency toward L-threonine is about sixfold higher than that toward L-serine. Also shows weak activity toward L-allo-threonine, but cannot use the corresponding D-amino acids. Does not exhibit racemase activity toward various amino acids, including serine. Physiologically, is likely involved in the threonine-dependent pathway of isoleucine biosynthesis. In Thermotoga maritima (strain ATCC 43589 / DSM 3109 / JCM 10099 / NBRC 100826 / MSB8), this protein is L-threonine ammonia-lyase.